The sequence spans 55 residues: Large ribosomal subunit protein bL33 (55 aa).

This sequence belongs to the bacterial ribosomal protein bL33 family.

This Rhodopseudomonas palustris (strain BisB5) protein is Large ribosomal subunit protein bL33.